Reading from the N-terminus, the 218-residue chain is Glutathione S-transferase PM239X14 (218 aa).

The region spanning 2 to 85 is the GST N-terminal domain; the sequence is VTVKLYGMAY…YLVAKYGKGS (84 aa). Residues 12-13, 41-42, 55-56, and 69-70 each bind glutathione; these read ST, HK, VI, and ES. The 126-residue stretch at 93 to 218 folds into the GST C-terminal domain; it reads DPKAYGLFEQ…LLRNSSKEFM (126 aa).

This sequence belongs to the GST superfamily. Phi family. In terms of tissue distribution, expressed in vegetative rosettes.

The protein localises to the cytoplasm. It localises to the cytosol. The enzyme catalyses RX + glutathione = an S-substituted glutathione + a halide anion + H(+). In terms of biological role, specifically catalyzes the conjugation of synthetic 1-chloro-2,4-ditrobenzene to GSH. Also functions as a glutathione peroxidase, converting linoleate oxidation products into their corresponding hydroxyacids. This enzyme may thus serve to protect the cell from oxygen toxicity as well as from exogenous toxins such as herbicides. The polypeptide is Glutathione S-transferase PM239X14 (Arabidopsis thaliana (Mouse-ear cress)).